Here is a 436-residue protein sequence, read N- to C-terminus: Methylenetetrahydrofolate--tRNA-(uracil-5-)-methyltransferase TrmFO (436 aa).

Position 10–15 (10–15 (GAGLAG)) interacts with FAD.

It belongs to the MnmG family. TrmFO subfamily. It depends on FAD as a cofactor.

It localises to the cytoplasm. It carries out the reaction uridine(54) in tRNA + (6R)-5,10-methylene-5,6,7,8-tetrahydrofolate + NADH + H(+) = 5-methyluridine(54) in tRNA + (6S)-5,6,7,8-tetrahydrofolate + NAD(+). It catalyses the reaction uridine(54) in tRNA + (6R)-5,10-methylene-5,6,7,8-tetrahydrofolate + NADPH + H(+) = 5-methyluridine(54) in tRNA + (6S)-5,6,7,8-tetrahydrofolate + NADP(+). Its function is as follows. Catalyzes the folate-dependent formation of 5-methyl-uridine at position 54 (M-5-U54) in all tRNAs. The sequence is that of Methylenetetrahydrofolate--tRNA-(uracil-5-)-methyltransferase TrmFO from Staphylococcus carnosus (strain TM300).